Consider the following 364-residue polypeptide: tRNA 2-selenouridine synthase (364 aa).

The Rhodanese domain occupies 14-137; sequence LIADTPIIDV…LRQTAIQATI (124 aa). Cys-97 acts as the S-selanylcysteine intermediate in catalysis.

Belongs to the SelU family. Monomer.

The catalysed reaction is 5-methylaminomethyl-2-thiouridine(34) in tRNA + selenophosphate + (2E)-geranyl diphosphate + H2O + H(+) = 5-methylaminomethyl-2-selenouridine(34) in tRNA + (2E)-thiogeraniol + phosphate + diphosphate. The enzyme catalyses 5-methylaminomethyl-2-thiouridine(34) in tRNA + (2E)-geranyl diphosphate = 5-methylaminomethyl-S-(2E)-geranyl-thiouridine(34) in tRNA + diphosphate. It carries out the reaction 5-methylaminomethyl-S-(2E)-geranyl-thiouridine(34) in tRNA + selenophosphate + H(+) = 5-methylaminomethyl-2-(Se-phospho)selenouridine(34) in tRNA + (2E)-thiogeraniol. It catalyses the reaction 5-methylaminomethyl-2-(Se-phospho)selenouridine(34) in tRNA + H2O = 5-methylaminomethyl-2-selenouridine(34) in tRNA + phosphate. Functionally, involved in the post-transcriptional modification of the uridine at the wobble position (U34) of tRNA(Lys), tRNA(Glu) and tRNA(Gln). Catalyzes the conversion of 2-thiouridine (S2U-RNA) to 2-selenouridine (Se2U-RNA). Acts in a two-step process involving geranylation of 2-thiouridine (S2U) to S-geranyl-2-thiouridine (geS2U) and subsequent selenation of the latter derivative to 2-selenouridine (Se2U) in the tRNA chain. The polypeptide is tRNA 2-selenouridine synthase (Shigella boydii serotype 18 (strain CDC 3083-94 / BS512)).